We begin with the raw amino-acid sequence, 193 residues long: Phosphatidylglycerophosphatase and protein-tyrosine phosphatase 1 (193 aa).

The transit peptide at 1–31 directs the protein to the mitochondrion; sequence MAASAWLEAGLARVLFYPTLLYTVFRGRVGG. The Tyrosine-protein phosphatase domain occupies 37–188; sequence WYHRIDHTVL…LKEFHKEIAA (152 aa). N6-succinyllysine is present on Lys-85. Cys-132 serves as the catalytic Phosphocysteine intermediate.

Belongs to the protein-tyrosine phosphatase family. Non-receptor class dual specificity subfamily. Interacts with STYXL1; the interaction inhibits PTPMT1 catalytic activity. As to expression, expressed in liver and in pancreatic beta cells.

It localises to the mitochondrion inner membrane. It catalyses the reaction O-phospho-L-tyrosyl-[protein] + H2O = L-tyrosyl-[protein] + phosphate. The catalysed reaction is O-phospho-L-seryl-[protein] + H2O = L-seryl-[protein] + phosphate. The enzyme catalyses O-phospho-L-threonyl-[protein] + H2O = L-threonyl-[protein] + phosphate. It carries out the reaction a 1,2-diacyl-sn-glycero-3-phospho-(1'-sn-glycero-3'-phosphate) + H2O = a 1,2-diacyl-sn-glycero-3-phospho-(1'-sn-glycerol) + phosphate. It catalyses the reaction 1,2-di-(9Z-octadecenoyl)-sn-glycero-3-phospho-(1'-sn-glycerol-3'-phosphate) + H2O = 1,2-di-(9Z-octadecenoyl)-sn-glycero-3-phospho-(1'-sn-glycerol) + phosphate. The catalysed reaction is 1,2-dioctanoyl-sn-glycero-3-phospho-(1D-myo-inositol-5-phosphate) + H2O = 1,2-dioctanoyl-sn-glycero-3-phospho-(1D-myo-inositol) + phosphate. The enzyme catalyses a 1-acyl-2-hexanoyl-sn-glycero-3-phospho-(1D-myo-inositol-5-phosphate) + H2O = a 1-acyl-2-hexanoyl-sn-glycero-3-phospho-(1D-myo-inositol) + phosphate. It carries out the reaction 1,2-dibutyryl-sn-glycero-3-phospho-(1D-myo-inositol-5-phosphate) + H2O = 1,2-dibutyryl-sn-glycero-3-phospho-(1D-myo-inositol) + phosphate. The protein operates within phospholipid metabolism; phosphatidylglycerol biosynthesis; phosphatidylglycerol from CDP-diacylglycerol: step 2/2. Its function is as follows. Lipid phosphatase which dephosphorylates phosphatidylglycerophosphate (PGP) to phosphatidylglycerol (PG). PGP is an essential intermediate in the biosynthetic pathway of cardiolipin, a mitochondrial-specific phospholipid regulating the membrane integrity and activities of the organelle. Has also been shown to display phosphatase activity toward phosphoprotein substrates, specifically mediates dephosphorylation of mitochondrial proteins, thereby playing an essential role in ATP production. Has probably a preference for proteins phosphorylated on Ser and/or Thr residues compared to proteins phosphorylated on Tyr residues. Probably involved in regulation of insulin secretion in pancreatic beta cells. May prevent intrinsic apoptosis, probably by regulating mitochondrial membrane integrity. The chain is Phosphatidylglycerophosphatase and protein-tyrosine phosphatase 1 from Rattus norvegicus (Rat).